The following is a 1117-amino-acid chain: MALATGAKYYHSCINCGGINTDTRNEKGLPCEVCLPFEDGDVLKGLKLNNSLKGYEKYWNLNQQYKEFEEFFFSKINKKPTGYQRFWAKRLLLSKSFTLVAPTGVGKTTFGLISALWIAKKGGKVALVFPTVSLVEQAAKRLIEFSKEDEDVNILFYTSSLKKKEREKFEKNFSEGNYDILVISSQFISKRKEQLSQKVFDLVFVDDVDAVLKSSKNIDTLLNMIGISQKAIDSTLDNLKKGNNSDKIQIEEKAPKGRLIVSSATAKPKGIKPLLFRELLGFEIGRFTTSARNITNVRIKEKSLEKLLYIINLLKDGILLFVPTEEEGKEIANYLEEHGVKLGKTWEDFEKSFEKFKEGSLQLLCGIYSYYGKLVRGIDLPLRIKFAVFWGTPSFKFSTKLENAPRFILERNFQDYLENNPKLKAYFKDLQRLSTEKLRKSVEKYISPETWEKLIQKNFPTTKFDKEKNLIVIPDVYTYIQASGRTSRIFGTSLTKGISILFEEDDSLFELLKARLLYLTEEEWTEEGEIEHLVKEAEETRKAISTDSSSKDMKSRMIIVESPTKAQTISKFLEKSSTRRYGSLMVHESITQEGILLLTASKGHLYDLETKTGLHGVEINDGRFIPYYNSIKRCSSCGAQFTDELPRCPYCNSDKIDDKKKILEALRDIAMEVDEVIIATDPDVEGEKIGWDISQYIKPVNKNVQRIEMHEITKFGFDKAIRNRRNCDVNLVKSQIVRRIEDRWVGFELSLRLQKNFQNSNLSAGRVQSTVLGWILEKEIEHSKSKKTVTQFTLDNGFKFEVDGKIDVDEVEVEIVEEKEQALSPLPPFNTPSLLTAASQQFKLPVQQIMEILQTLFELGFITYHRTDSTRISSTGQKIARSYLEKIGKITLLSEREWGKEGAHEAIRPVKPISPEELSEFITEKIAAYLSPMHIKVYSLIFNRFMASQMTSPVVINQKILIKNGSFQVEREVPVKLQEEGWNIFNPITVYTPFEEKKYSVVSKRTYTTHTVPLFTQASLIEEMQKRNIGRPSTYAKIVDILFKRKYIIEDVYKRLRTTALGRKVYSYLSERYMNYINEETTRQLEKLMESVETGEKDYQSVLKNLYEELNEILIKN.

The segment at Leu3–Val42 adopts an RG N-terminal-type zinc-finger fold. Residues Cys13, Cys16, Cys31, and Cys34 each contribute to the Zn(2+) site. Residues Gln84 and Ala101 to Thr108 each bind ATP. In terms of domain architecture, Helicase ATP-binding spans Ala88–Ile284. Residues Asp206–Asp209 carry the DEAD box motif. Residues Lys551–Asn1117 form a topoisomerase I region. The Toprim domain occupies Ser555–Ile712. Residue Glu561 participates in Mg(2+) binding. The RG C-terminal-type zinc-finger motif lies at Ile631 to Asp658. Positions 634, 637, 648, and 651 each coordinate Zn(2+). Asp681 contributes to the Mg(2+) binding site. In terms of domain architecture, Topo IA-type catalytic spans Asp728–Leu1114. The active-site O-(5'-phospho-DNA)-tyrosine intermediate is the Tyr864.

The protein in the N-terminal section; belongs to the DEAD box helicase family. DDVD subfamily. This sequence in the C-terminal section; belongs to the type IA topoisomerase family. As to quaternary structure, monomer. Requires Zn(2+) as cofactor. The cofactor is Mg(2+).

The protein localises to the cytoplasm. The catalysed reaction is ATP + H2O = ADP + phosphate + H(+). Modifies the topological state of DNA by introducing positive supercoils in an ATP-dependent process, increasing the linking number in steps of +1; also positively supercoils with dATP and ATP-gamma-S. With UTP or dTTP relaxes negatively supercoiled DNA, in the absence of any nucleotide partially relaxes negative supercoils. In the absence of nucleotide has a higher affinity for dsDNA with a single-stranded tail than dsDNA or ssDNA. Has an ATPase activity in the absence of DNA. Binds to single-stranded DNA, transiently cleaves and then rejoins the ends, introducing a positive supercoil in the process. The scissile phosphodiester is attacked by the catalytic tyrosine of the enzyme, resulting in the formation of a DNA-(5'-phosphotyrosyl)-enzyme intermediate. Probably involved in rewinding DNA strands in regions of the chromosome that have opened up to allow replication, transcription, DNA repair and/or for DNA protection. The chain is Reverse gyrase from Caldanaerobacter subterraneus subsp. tengcongensis (strain DSM 15242 / JCM 11007 / NBRC 100824 / MB4) (Thermoanaerobacter tengcongensis).